The chain runs to 531 residues: MERLAGRIILLSGVSRAFVGFLAGLLAVLAQPPFGIFAAAFVSFPVLVWLIDGVAPDPSDGAFRRLRQPAAIGWSFGFGYFLGGLWWLGNALLVEADAFAWAIPLAVVGLPAVLGVFYALAVVIARCLWSDGWGRIAALALGFGIAEWLRGFVFTGFPWNAIGYAAMPMPLMMQSASVVNLSTINMLAVFVFAAPALIWTGKGARTGLAIAVALFTAHIAFGFYRLAQPAPPSAAPQMAVRVVQPVIDQAKKLDDRERASIFEDHLSLTAAPVQGGGKRPDIVVWPETSIPFILTDNPDALARIAEVLKDGQILVAGAVRAEDAGAGLPSRYYNSVYVIDDRGQIIGAADKVHLVPFGEYLPYEDLLTSWGLSSIAASMPGGFSAARMRPVLTLPGGRRLYPMICYEAIFADEVDANARLADVLLNVTNDAWFGDTPGPRQHFHQAQLRAVETGIPMIRAANTGISAVVDARGVLVLVLGYNYRGVLDTILPGKLPTLTDVPTRSRIFWLSMAILSIVASFSRFGFNIRKN.

Transmembrane regions (helical) follow at residues 8–28 (IILLSGVSRAFVGFLAGLLAV), 34–54 (FGIFAAAFVSFPVLVWLIDGV), 69–89 (PAAIGWSFGFGYFLGGLWWLG), 105–125 (LAVVGLPAVLGVFYALAVVIA), 136–156 (IAALALGFGIAEWLRGFVFTG), 178–198 (VVNLSTINMLAVFVFAAPALI), and 207–227 (GLAIAVALFTAHIAFGFYRLA). The CN hydrolase domain occupies 243-493 (VQPVIDQAKK…RGVLDTILPG (251 aa)). Glu287 functions as the Proton acceptor in the catalytic mechanism. Residue Lys351 is part of the active site. Cys405 acts as the Nucleophile in catalysis. A helical membrane pass occupies residues 507 to 527 (IFWLSMAILSIVASFSRFGFN).

This sequence belongs to the CN hydrolase family. Apolipoprotein N-acyltransferase subfamily.

The protein localises to the cell inner membrane. It carries out the reaction N-terminal S-1,2-diacyl-sn-glyceryl-L-cysteinyl-[lipoprotein] + a glycerophospholipid = N-acyl-S-1,2-diacyl-sn-glyceryl-L-cysteinyl-[lipoprotein] + a 2-acyl-sn-glycero-3-phospholipid + H(+). Its pathway is protein modification; lipoprotein biosynthesis (N-acyl transfer). Functionally, catalyzes the phospholipid dependent N-acylation of the N-terminal cysteine of apolipoprotein, the last step in lipoprotein maturation. In Sinorhizobium medicae (strain WSM419) (Ensifer medicae), this protein is Apolipoprotein N-acyltransferase.